The primary structure comprises 536 residues: Chaperonin GroEL (536 aa).

ATP is bound by residues 29–32 (TLGP), 86–90 (DGTTT), glycine 412, and aspartate 493.

This sequence belongs to the chaperonin (HSP60) family. Forms a cylinder of 14 subunits composed of two heptameric rings stacked back-to-back. Interacts with the co-chaperonin GroES.

It is found in the cytoplasm. The catalysed reaction is ATP + H2O + a folded polypeptide = ADP + phosphate + an unfolded polypeptide.. In terms of biological role, together with its co-chaperonin GroES, plays an essential role in assisting protein folding. The GroEL-GroES system forms a nano-cage that allows encapsulation of the non-native substrate proteins and provides a physical environment optimized to promote and accelerate protein folding. In Aster yellows witches'-broom phytoplasma (strain AYWB), this protein is Chaperonin GroEL.